Reading from the N-terminus, the 108-residue chain is Glutaredoxin (108 aa).

The Glutaredoxin domain maps to 3–103 (LAKAKEIVSG…PLLTEAGAIA (101 aa)). Residues cysteine 23 and cysteine 26 are joined by a disulfide bond.

Belongs to the glutaredoxin family. CPYC subfamily.

The protein localises to the cytoplasm. Its function is as follows. Has a glutathione-disulfide oxidoreductase activity in the presence of NADPH and glutathione reductase. Reduces low molecular weight disulfides and proteins. The sequence is that of Glutaredoxin from Solanum lycopersicum (Tomato).